Here is a 244-residue protein sequence, read N- to C-terminus: CTD nuclear envelope phosphatase 1 (244 aa).

Residues 7–29 (LLGLRTFVAFAAKLWSFFIYLLR) form a helical membrane-spanning segment. The region spanning 57–224 (AQVKRKILVL…LNLLPMLDAL (168 aa)) is the FCP1 homology domain.

The protein belongs to the dullard family. In terms of assembly, interacts with CNEP1R1; the complex dephosphorylates LPIN1 and LPIN2. In terms of tissue distribution, muscle specific with lower expression in other metabolic tissues.

The protein resides in the endoplasmic reticulum membrane. Its subcellular location is the nucleus membrane. The catalysed reaction is O-phospho-L-seryl-[protein] + H2O = L-seryl-[protein] + phosphate. The enzyme catalyses O-phospho-L-threonyl-[protein] + H2O = L-threonyl-[protein] + phosphate. Functionally, serine/threonine protein phosphatase forming with CNEP1R1 an active phosphatase complex that dephosphorylates and may activate LPIN1 and LPIN2. LPIN1 and LPIN2 are phosphatidate phosphatases that catalyze the conversion of phosphatidic acid to diacylglycerol and control the metabolism of fatty acids at different levels. May indirectly modulate the lipid composition of nuclear and/or endoplasmic reticulum membranes and be required for proper nuclear membrane morphology and/or dynamics. May also indirectly regulate the production of lipid droplets and triacylglycerol. May antagonize BMP signaling. The polypeptide is CTD nuclear envelope phosphatase 1 (Ctdnep1) (Mus musculus (Mouse)).